The sequence spans 343 residues: Thromboxane A2 receptor (343 aa).

Residues 1–29 (MWPNGSSLGPCFRPTNITLEERRLIASPW) lie on the Extracellular side of the membrane. N-linked (GlcNAc...) asparagine glycans are attached at residues asparagine 4 and asparagine 16. A helical transmembrane segment spans residues 30–52 (FAASFCVVGLASNLLALSVLAGA). Residues 53–66 (RQGGSHTRSSFLTF) lie on the Cytoplasmic side of the membrane. The helical transmembrane segment at 67–87 (LCGLVLTDFLGLLVTGAIVVS) threads the bilayer. Over 88-106 (QHAALFEWHAVDPGCRLCR) the chain is Extracellular. A disulfide bridge links cysteine 105 with cysteine 183. Residues 107–128 (FMGVVMIFFGLSPLLLGATMAS) form a helical membrane-spanning segment. Over 129 to 149 (ERFLGITRPFSRPVVTSQRRA) the chain is Cytoplasmic. The chain crosses the membrane as a helical span at residues 150 to 172 (WATVGLVWAAALALGLLPLLGLG). The Extracellular segment spans residues 173–193 (RYTVQYPGSWCFLTLGAESGD). A helical transmembrane segment spans residues 194 to 219 (VAFGLLFSMLGGLSVGLSFLLNTVSV). Residues 220–246 (ATLCHVYHGQEAAQQRPRDSEVEMMAQ) lie on the Cytoplasmic side of the membrane. A helical membrane pass occupies residues 247–270 (LLGIMLVASVCWLPLLVFIAQTVL). Residues 271–289 (RNPPAMSPSGQLSRATEQE) lie on the Extracellular side of the membrane. Residues 290–311 (LLIYLRVATWNQILDPWVYILF) traverse the membrane as a helical segment. At 312 to 343 (RRAVLRRLQPRLSTRPRSLSLQPQLTQRSGLQ) the chain is on the cytoplasmic side. A phosphoserine mark is found at serine 329 and serine 331.

This sequence belongs to the G-protein coupled receptor 1 family. As to quaternary structure, interacts with RPGRIP1L. Interacts with RACK1; the interaction regulates TBXA2R cell surface expression.

The protein resides in the cell membrane. In terms of biological role, receptor for thromboxane A2 (TXA2), a potent stimulator of platelet aggregation. The activity of this receptor is mediated by a G-protein that activates a phosphatidylinositol-calcium second messenger system. In the kidney, the binding of TXA2 to glomerular TP receptors causes intense vasoconstriction. Activates phospholipase C and adenylyl cyclase. This Chlorocebus aethiops (Green monkey) protein is Thromboxane A2 receptor (TBXA2R).